A 654-amino-acid chain; its full sequence is Acetyl-coenzyme A synthetase (654 aa).

CoA contacts are provided by residues 196-199 and T316; that span reads RGGK. ATP-binding positions include 392–394, 416–421, D506, and R521; these read GEP and DTWWQT. Residue S529 coordinates CoA. R532 serves as a coordination point for ATP. Mg(2+) contacts are provided by V543 and V548. K618 carries the N6-acetyllysine modification.

Belongs to the ATP-dependent AMP-binding enzyme family. The cofactor is Mg(2+). Post-translationally, acetylated. Deacetylation by the SIR2-homolog deacetylase activates the enzyme.

The catalysed reaction is acetate + ATP + CoA = acetyl-CoA + AMP + diphosphate. In terms of biological role, catalyzes the conversion of acetate into acetyl-CoA (AcCoA), an essential intermediate at the junction of anabolic and catabolic pathways. AcsA undergoes a two-step reaction. In the first half reaction, AcsA combines acetate with ATP to form acetyl-adenylate (AcAMP) intermediate. In the second half reaction, it can then transfer the acetyl group from AcAMP to the sulfhydryl group of CoA, forming the product AcCoA. The protein is Acetyl-coenzyme A synthetase of Methylobacillus flagellatus (strain ATCC 51484 / DSM 6875 / VKM B-1610 / KT).